The sequence spans 543 residues: CTP synthase (543 aa).

The tract at residues 1 to 265 is amidoligase domain; it reads MARYIFITGG…DDEVLAAFGI (265 aa). Ser-13 contacts CTP. Ser-13 lines the UTP pocket. 14 to 19 is a binding site for ATP; the sequence is SLGKGL. L-glutamine is bound at residue Tyr-54. Asp-71 is an ATP binding site. Asp-71 and Glu-139 together coordinate Mg(2+). CTP is bound by residues 146–148, 186–191, and Lys-222; these read DIE and KTKPTQ. UTP-binding positions include 186-191 and Lys-222; that span reads KTKPTQ. Residue 238–240 coordinates ATP; the sequence is RDV. The Glutamine amidotransferase type-1 domain maps to 291–542; it reads TIAIVGKYTG…VQAAVVQSRL (252 aa). L-glutamine is bound at residue Gly-353. Cys-380 (nucleophile; for glutamine hydrolysis) is an active-site residue. L-glutamine contacts are provided by residues 381–384, Glu-404, and Arg-470; that span reads FGMQ. Active-site residues include His-515 and Glu-517.

The protein belongs to the CTP synthase family. Homotetramer.

The enzyme catalyses UTP + L-glutamine + ATP + H2O = CTP + L-glutamate + ADP + phosphate + 2 H(+). It carries out the reaction L-glutamine + H2O = L-glutamate + NH4(+). It catalyses the reaction UTP + NH4(+) + ATP = CTP + ADP + phosphate + 2 H(+). The protein operates within pyrimidine metabolism; CTP biosynthesis via de novo pathway; CTP from UDP: step 2/2. With respect to regulation, allosterically activated by GTP, when glutamine is the substrate; GTP has no effect on the reaction when ammonia is the substrate. The allosteric effector GTP functions by stabilizing the protein conformation that binds the tetrahedral intermediate(s) formed during glutamine hydrolysis. Inhibited by the product CTP, via allosteric rather than competitive inhibition. Functionally, catalyzes the ATP-dependent amination of UTP to CTP with either L-glutamine or ammonia as the source of nitrogen. Regulates intracellular CTP levels through interactions with the four ribonucleotide triphosphates. The chain is CTP synthase from Rhodopseudomonas palustris (strain BisB18).